A 254-amino-acid chain; its full sequence is Isoprenyl transferase (254 aa).

The active site involves aspartate 24. Residue aspartate 24 coordinates Mg(2+). Residues 25–28 (GNGR), tryptophan 29, arginine 37, histidine 41, and 69–71 (SSE) contribute to the substrate site. Residue asparagine 72 is the Proton acceptor of the active site. Substrate is bound by residues tryptophan 73, arginine 75, arginine 192, and 198–200 (RIS). Glutamate 211 contributes to the Mg(2+) binding site.

This sequence belongs to the UPP synthase family. In terms of assembly, homodimer. Mg(2+) serves as cofactor.

Catalyzes the condensation of isopentenyl diphosphate (IPP) with allylic pyrophosphates generating different type of terpenoids. The polypeptide is Isoprenyl transferase (Bordetella parapertussis (strain 12822 / ATCC BAA-587 / NCTC 13253)).